The sequence spans 418 residues: Peptide chain release factor subunit 1 (418 aa).

The protein belongs to the eukaryotic release factor 1 family. In terms of assembly, heterodimer of two subunits, one of which binds GTP.

It localises to the cytoplasm. Functionally, directs the termination of nascent peptide synthesis (translation) in response to the termination codons UAA, UAG and UGA. This is Peptide chain release factor subunit 1 from Haloarcula marismortui (strain ATCC 43049 / DSM 3752 / JCM 8966 / VKM B-1809) (Halobacterium marismortui).